A 417-amino-acid chain; its full sequence is MNFSEQFTGRSEPGRKANRTSNNNTNSTTNVATVTTDDSNRPACDRCKGQKLRCIWENGSNTCRRCTRARAVCQQPRPRPFGRPRCSTKSKHHVAQNQANTKIWVSSTTQQPQENDAEMPMATSDDHDPTSFLSSTAVDLPRYLGLASFPTDPSLQIAISPPHGVHGNSFNLETGLLGNFSDAQFKNPATFYQPQGFINAANPATPAPVPVPASAPVSADGASLFEFDPDDISGDSEHSHCHWLKQLGDLNVAIYQHPLHPKPAGVSTPGVSTGFSAEQVSLSSLQIGRLLHMTSRLGRLTEEIDSADHVQPKNDGSAESDSFGGIKLAINDRSTLFVVLSCYVRLEETFAQALATVVEIRRRGPLSDDTYQLMPRLTVDGWSLECCQTMQIDFVIYICEQTLVRIRRSITSLHADM.

Residues 1 to 40 form a disordered region; that stretch reads MNFSEQFTGRSEPGRKANRTSNNNTNSTTNVATVTTDDSN. A compositionally biased stretch (low complexity) spans 19-37; sequence RTSNNNTNSTTNVATVTTD. A DNA-binding region (zn(2)-C6 fungal-type) is located at residues 44 to 73; sequence CDRCKGQKLRCIWENGSNTCRRCTRARAVC. 2 disordered regions span residues 75–94 and 104–128; these read QPRPRPFGRPRCSTKSKHHV and WVSSTTQQPQENDAEMPMATSDDHD. Over residues 80 to 94 the composition is skewed to basic residues; the sequence is PFGRPRCSTKSKHHV. Polar residues predominate over residues 104–114; it reads WVSSTTQQPQE.

The protein localises to the nucleus. Functionally, C6 finger transcription factor; part of the tra gene cluster that produces terrestric acid. The clavatol biosynthesis cluster cla and the terrestric acid cluster tra are both involved in the production of peniphenones and penilactones. The sequence is that of C6 finger transcription factor traC from Penicillium crustosum (Blue mold fungus).